The primary structure comprises 464 residues: ATP-dependent protease ATPase subunit HslU (464 aa).

Residues Val-19, 61–66 (GVGKTE), Asp-278, Glu-342, and Arg-414 each bind ATP.

The protein belongs to the ClpX chaperone family. HslU subfamily. In terms of assembly, a double ring-shaped homohexamer of HslV is capped on each side by a ring-shaped HslU homohexamer. The assembly of the HslU/HslV complex is dependent on binding of ATP.

Its subcellular location is the cytoplasm. ATPase subunit of a proteasome-like degradation complex; this subunit has chaperone activity. The binding of ATP and its subsequent hydrolysis by HslU are essential for unfolding of protein substrates subsequently hydrolyzed by HslV. HslU recognizes the N-terminal part of its protein substrates and unfolds these before they are guided to HslV for hydrolysis. This Halalkalibacterium halodurans (strain ATCC BAA-125 / DSM 18197 / FERM 7344 / JCM 9153 / C-125) (Bacillus halodurans) protein is ATP-dependent protease ATPase subunit HslU.